Here is a 469-residue protein sequence, read N- to C-terminus: UDP-N-acetylmuramate--L-alanine ligase (469 aa).

Gly120–Thr126 contacts ATP.

Belongs to the MurCDEF family.

It localises to the cytoplasm. It catalyses the reaction UDP-N-acetyl-alpha-D-muramate + L-alanine + ATP = UDP-N-acetyl-alpha-D-muramoyl-L-alanine + ADP + phosphate + H(+). The protein operates within cell wall biogenesis; peptidoglycan biosynthesis. Its function is as follows. Cell wall formation. In Acetivibrio thermocellus (strain ATCC 27405 / DSM 1237 / JCM 9322 / NBRC 103400 / NCIMB 10682 / NRRL B-4536 / VPI 7372) (Clostridium thermocellum), this protein is UDP-N-acetylmuramate--L-alanine ligase.